Here is a 254-residue protein sequence, read N- to C-terminus: MTPQRIGFVASNAPVAQEALNVMAARYGQCPLPEADAIVALGGDGFMLQTLHETQSLDIPVYGMNRGTVGFLMNGYAEDGLRERLAEAEEEILNPLAMTAVTGAGEVFHRIAINEVSLLRAGPQAAWLKISVDGKVRMEELVCDGALVCTPAGSTAYNYSAHGPILPIGADVLALTAIAPFRPRRWRGALLPKTALVRFDVIDAQKRPVMADADGRSVRDVVSVEIRTEPAVRHRLLFDPGHGLEERLIREQFV.

Aspartate 44 serves as the catalytic Proton acceptor. NAD(+) contacts are provided by residues 44 to 45, 114 to 115, aspartate 144, alanine 152, 155 to 160, and alanine 179; these read DG, NE, and TAYNYS.

The protein belongs to the NAD kinase family. The cofactor is a divalent metal cation.

The protein localises to the cytoplasm. The enzyme catalyses NAD(+) + ATP = ADP + NADP(+) + H(+). In terms of biological role, involved in the regulation of the intracellular balance of NAD and NADP, and is a key enzyme in the biosynthesis of NADP. Catalyzes specifically the phosphorylation on 2'-hydroxyl of the adenosine moiety of NAD to yield NADP. This chain is NAD kinase, found in Cereibacter sphaeroides (strain ATCC 17023 / DSM 158 / JCM 6121 / CCUG 31486 / LMG 2827 / NBRC 12203 / NCIMB 8253 / ATH 2.4.1.) (Rhodobacter sphaeroides).